Reading from the N-terminus, the 285-residue chain is MQNPKDDVLYAPVEWIDHSEGYSDIRYHKSTDGIAKITINRPEVRNAFRPQTVKEMMTAFSDARFDENIGVIVLTGEGEKAFCSGGDQKVRGDYGGYKDDSGVHHLNVLDFQRDIRSCPKPVVAMVAGYAIGGGHVLHMLCDLTIAAENAIFGQTGPKVGSFDGGWGASYMARLVGQKKAREIWFLCRQYNAQEALDMGLVNTVVPYADLEKETVRWCREMLRNSPIAIRCLKAALNADCDGQAGLQELAGNATMLFYMTEEGQEGRNAFNEKRAPDFSKFRRNP.

Residues Arg45, Ser84–Gln88, Tyr97, Tyr129–Gly133, Thr155, Ser161, Tyr258, and Lys273 each bind substrate. Gln154 to Gly156 is a binding site for hydrogencarbonate.

Belongs to the enoyl-CoA hydratase/isomerase family. MenB subfamily. Hydrogencarbonate serves as cofactor.

It carries out the reaction 2-succinylbenzoyl-CoA + H(+) = 1,4-dihydroxy-2-naphthoyl-CoA + H2O. It functions in the pathway quinol/quinone metabolism; 1,4-dihydroxy-2-naphthoate biosynthesis; 1,4-dihydroxy-2-naphthoate from chorismate: step 6/7. The protein operates within quinol/quinone metabolism; menaquinone biosynthesis. Its function is as follows. Converts o-succinylbenzoyl-CoA (OSB-CoA) to 1,4-dihydroxy-2-naphthoyl-CoA (DHNA-CoA). The sequence is that of 1,4-dihydroxy-2-naphthoyl-CoA synthase from Haemophilus influenzae (strain ATCC 51907 / DSM 11121 / KW20 / Rd).